The chain runs to 266 residues: Hydroxyethylthiazole kinase (266 aa).

Residue methionine 44 coordinates substrate. 2 residues coordinate ATP: lysine 120 and threonine 166. Substrate is bound at residue glycine 193.

Belongs to the Thz kinase family. The cofactor is Mg(2+).

It carries out the reaction 5-(2-hydroxyethyl)-4-methylthiazole + ATP = 4-methyl-5-(2-phosphooxyethyl)-thiazole + ADP + H(+). It participates in cofactor biosynthesis; thiamine diphosphate biosynthesis; 4-methyl-5-(2-phosphoethyl)-thiazole from 5-(2-hydroxyethyl)-4-methylthiazole: step 1/1. Its function is as follows. Catalyzes the phosphorylation of the hydroxyl group of 4-methyl-5-beta-hydroxyethylthiazole (THZ). This Syntrophomonas wolfei subsp. wolfei (strain DSM 2245B / Goettingen) protein is Hydroxyethylthiazole kinase.